Consider the following 296-residue polypeptide: Formylmethanofuran--tetrahydromethanopterin formyltransferase (296 aa).

The protein belongs to the FTR family. In terms of assembly, homotetramer composed of two dimers. Dimerization is sufficient for enzyme activity, but tetramerization is required for high thermostability.

The protein resides in the cytoplasm. It catalyses the reaction N-formylmethanofuran + 5,6,7,8-tetrahydromethanopterin + H(+) = N(5)-formyl-5,6,7,8-tetrahydromethanopterin + methanofuran. Its pathway is one-carbon metabolism; methanogenesis from CO(2); 5,10-methenyl-5,6,7,8-tetrahydromethanopterin from CO(2): step 2/3. With respect to regulation, requires high salt concentrations for activity and thermostability; 1.5-1.8 M KH(2)PO(4) stimulates activity while stabilizing the enzyme. Its function is as follows. Catalyzes the reversible transfer of a formyl group from formylmethanofuran (formyl-MFR) to tetrahydromethanopterin (H(4)MPT) to produce 5-formyl tetrahydromethanopterin (5-formyl-H(4)MPT) and methanofuran (MFR). Acts via a ternary-complex mechanism. Uses N-furfurylformamide much less efficiently, does not use N-methylformamide or formamide. Protein overexpressed in E.coli has very similar properties to enzyme purified from M.kandleri. The sequence is that of Formylmethanofuran--tetrahydromethanopterin formyltransferase from Methanopyrus kandleri (strain AV19 / DSM 6324 / JCM 9639 / NBRC 100938).